A 333-amino-acid chain; its full sequence is Nucleoid-associated protein VV1_3120 (333 aa).

It belongs to the YejK family.

It is found in the cytoplasm. The protein localises to the nucleoid. In Vibrio vulnificus (strain CMCP6), this protein is Nucleoid-associated protein VV1_3120.